We begin with the raw amino-acid sequence, 252 residues long: N-acetylglucosaminyl-phosphatidylinositol de-N-acetylase (252 aa).

The chain crosses the membrane as a helical span at residues 2-22; the sequence is EVVGLLCVAVAVLTWGFLRVW. Residues 23-252 lie on the Cytoplasmic side of the membrane; it reads NSAERMRSPE…YMSVNSLQLL (230 aa).

Belongs to the PIGL family.

Its subcellular location is the endoplasmic reticulum membrane. The catalysed reaction is a 6-(N-acetyl-alpha-D-glucosaminyl)-1-(1,2-diacyl-sn-glycero-3-phospho)-1D-myo-inositol + H2O = a 6-(alpha-D-glucosaminyl)-1-(1,2-diacyl-sn-glycero-3-phospho)-1D-myo-inositol + acetate. Its pathway is glycolipid biosynthesis; glycosylphosphatidylinositol-anchor biosynthesis. Catalyzes the second step of glycosylphosphatidylinositol (GPI) biosynthesis, which is the de-N-acetylation of N-acetylglucosaminyl-phosphatidylinositol. The chain is N-acetylglucosaminyl-phosphatidylinositol de-N-acetylase (Pigl) from Rattus norvegicus (Rat).